The primary structure comprises 546 residues: NAD(P)H-quinone oxidoreductase chain 4 (546 aa).

Transmembrane regions (helical) follow at residues 17–37 (VPWLSLSILVPIVGALLVPFI), 48–68 (WYALGVTLITFLITVSAYLNG), 103–123 (LILLTSFITSLACLAAWPVSF), 127–147 (LFYFLLLAMDGGQIAVFAVQD), 149–169 (LLFFLAWELELIPVYLLLAIW), 181–201 (FILYTAGSSLFILLAALAMGF), 222–242 (GFQLLCYAGLLIAFGVKLPIV), 256–276 (TAPVHMLLAGILLKMGGYALL), 290–310 (FAPLLIVLGVVNIIYAALTSF), 327–347 (MGFVLIGVGSFSALGTSGAML), 348–368 (QMISHGLIGASLFFLVGATYD), 389–409 (FALWTVCALASLALPGMSGFV), 430–450 (VVICCLAAVGVILTPIYLLSM), and 477–497 (VYIIGCLLVPIIGIGLYPRLM).

The protein belongs to the complex I subunit 4 family.

It localises to the cellular thylakoid membrane. It catalyses the reaction a plastoquinone + NADH + (n+1) H(+)(in) = a plastoquinol + NAD(+) + n H(+)(out). The enzyme catalyses a plastoquinone + NADPH + (n+1) H(+)(in) = a plastoquinol + NADP(+) + n H(+)(out). In terms of biological role, NDH-1 shuttles electrons from NAD(P)H, via FMN and iron-sulfur (Fe-S) centers, to quinones in the respiratory chain. The immediate electron acceptor for the enzyme in this species is believed to be plastoquinone. Couples the redox reaction to proton translocation (for every two electrons transferred, four hydrogen ions are translocated across the cytoplasmic membrane), and thus conserves the redox energy in a proton gradient. The chain is NAD(P)H-quinone oxidoreductase chain 4 from Parasynechococcus marenigrum (strain WH8102).